A 420-amino-acid chain; its full sequence is Methionine aminopeptidase 2 (420 aa).

The disordered stretch occupies residues 1–48 (MSDAIAKDAVNTSSEKEPVSATPELKTSGSPDAAVSSGDKKKKKKKKK). His172 is a substrate binding site. Residues Asp192, Asp203, and His272 each coordinate a divalent metal cation. His280 contacts substrate. 2 residues coordinate a divalent metal cation: Glu305 and Glu401.

The protein belongs to the peptidase M24A family. Methionine aminopeptidase eukaryotic type 2 subfamily. Requires Co(2+) as cofactor. Zn(2+) is required as a cofactor. It depends on Mn(2+) as a cofactor. The cofactor is Fe(2+).

It is found in the cytoplasm. It carries out the reaction Release of N-terminal amino acids, preferentially methionine, from peptides and arylamides.. Functionally, cotranslationally removes the N-terminal methionine from nascent proteins. The N-terminal methionine is often cleaved when the second residue in the primary sequence is small and uncharged (Met-Ala-, Cys, Gly, Pro, Ser, Thr, or Val). This Lachancea thermotolerans (strain ATCC 56472 / CBS 6340 / NRRL Y-8284) (Yeast) protein is Methionine aminopeptidase 2.